The following is a 389-amino-acid chain: Acetyl-CoA:oxalate CoA-transferase (389 aa).

Residue histidine 237 is part of the active site.

In terms of assembly, homodimer.

The enzyme catalyses oxalate + acetyl-CoA = oxalyl-CoA + acetate. Functionally, involved in the catabolism of oxalate and in the adapatation to low pH. ACOCT serves to prime the oxalate-induced acid tolerance response (ATR) cycle by producing substrate for oxalyl-CoA decarboxylase (OXC) and formyl-coenzyme A transferase (FCOCT). Catalyzes the reversible conversion of acetyl-CoA and oxalate to oxalyl-CoA and acetate. It can also use formyl-CoA and oxalate to produce oxalyl-CoA and formate with significantly reduced specific activity. This is Acetyl-CoA:oxalate CoA-transferase (uctC) from Acetobacter aceti.